The primary structure comprises 589 residues: ATP-dependent ubiquitin transferase-like protein Cap2 (589 aa).

Cysteine 13 is covalently cross-linked (Glycyl cysteine dithioester (Cys-Gly) (interchain with G-Cter in DncV)). Lysine 77 is covalently cross-linked (Glycyl lysine isopeptide (Lys-Gly) (interchain with G-Cter in DncV)). Cysteine 91 (for E2-like domain) is an active-site residue. Residues lysine 305, lysine 387, and lysine 484 each participate in a glycyl lysine isopeptide (Lys-Gly) (interchain with G-Cter in DncV) cross-link. Residue cysteine 493 forms a Glycyl cysteine dithioester (Cys-Gly) (interchain with G-Cter in DncV) linkage. Active-site for E1-like domain residues include cysteine 493, cysteine 496, and cysteine 513. Cysteine 513 participates in a covalent cross-link: Glycyl cysteine dithioester (Cys-Gly) (interchain with G-Cter in DncV). Lysine 523 is covalently cross-linked (Glycyl lysine isopeptide (Lys-Gly) (interchain with G-Cter in DncV)).

In the C-terminal section; belongs to the HesA/MoeB/ThiF family. A Cap2 dimer is bound on either side by a DncV monomer. Post-translationally, conjugated to DncV via 5 different Lys residues and 3 Cys residues.

In terms of biological role, CD-NTase priming component of a CBASS antiviral system. CBASS (cyclic oligonucleotide-based antiphage signaling system) provides immunity against bacteriophages. The CD-NTase protein (DncV) synthesizes cyclic nucleotides in response to infection; these serve as specific second messenger signals. The signals activate a diverse range of effectors, leading to bacterial cell death and thus abortive phage infection. A type II-A(GA) CBASS system. Its function is as follows. Conjugates DncV to itself in vitro and to other cellular proteins in vivo; conjugation requires ATP. This primes DncV, upon phage infection CdnA activates and makes cyclic nucleotides. Protects E.coli against phage infection. When capV and dncV are introduced in E.coli MG1655 there is 1000-fold protection against phage P1; protection against other phage (T2, T4, T5, T6 and lambda-vir) requires the 2 subsequent genes. In another paper the capV-dncV-cap2-cap3 operon gives 10(4)-10(5)-fold protection against phages lambda, T2, T4 and T6, about 1000-fold protection against P1 and 10-fold protection against T5. This Escherichia coli (strain TW11681) protein is ATP-dependent ubiquitin transferase-like protein Cap2.